The primary structure comprises 73 residues: MQIKHLITLFFLVLIGADQCSAFFSLIPSLIGGLVFAIKGRKKREVSPQIDQYRNFQKREAELEELLDRLPMY.

The first 22 residues, 1–22, serve as a signal peptide directing secretion; the sequence is MQIKHLITLFFLVLIGADQCSA. The propeptide occupies 45–73; it reads EVSPQIDQYRNFQKREAELEELLDRLPMY.

It belongs to the non-disulfide-bridged peptide (NDBP) superfamily. Short antimicrobial peptide (group 4) family. Expressed by the venom gland.

It is found in the secreted. In terms of biological role, antibacterial peptide. The polypeptide is Putative antimicrobial peptide clone 5 (Tityus costatus (Brazilian scorpion)).